A 432-amino-acid chain; its full sequence is Adenylosuccinate synthetase (432 aa).

GTP contacts are provided by residues 13 to 19 (GDEGKGK) and 41 to 43 (GHT). The active-site Proton acceptor is the aspartate 14. Positions 14 and 41 each coordinate Mg(2+). Residues 14–17 (DEGK), 39–42 (NAGH), threonine 130, arginine 144, glutamine 225, threonine 240, and arginine 304 each bind IMP. The active-site Proton donor is histidine 42. 300-306 (ATTGRRR) is a substrate binding site. GTP-binding positions include arginine 306, 332–334 (KLD), and 415–417 (STG).

It belongs to the adenylosuccinate synthetase family. In terms of assembly, homodimer. Requires Mg(2+) as cofactor.

Its subcellular location is the cytoplasm. The catalysed reaction is IMP + L-aspartate + GTP = N(6)-(1,2-dicarboxyethyl)-AMP + GDP + phosphate + 2 H(+). It participates in purine metabolism; AMP biosynthesis via de novo pathway; AMP from IMP: step 1/2. Plays an important role in the de novo pathway of purine nucleotide biosynthesis. Catalyzes the first committed step in the biosynthesis of AMP from IMP. The sequence is that of Adenylosuccinate synthetase from Pectobacterium carotovorum subsp. carotovorum (strain PC1).